The primary structure comprises 224 residues: Lipoprotein-releasing system ATP-binding protein LolD (224 aa).

Residues 6–224 (LEFCNVSKFF…IVNHSLISSI (219 aa)) enclose the ABC transporter domain. 43 to 50 (GASGVGKT) lines the ATP pocket.

This sequence belongs to the ABC transporter superfamily. Lipoprotein translocase (TC 3.A.1.125) family. The complex is composed of two ATP-binding proteins (LolD) and two transmembrane proteins (LolC and LolE).

It is found in the cell inner membrane. Its function is as follows. Part of the ABC transporter complex LolCDE involved in the translocation of mature outer membrane-directed lipoproteins, from the inner membrane to the periplasmic chaperone, LolA. Responsible for the formation of the LolA-lipoprotein complex in an ATP-dependent manner. In Neorickettsia sennetsu (strain ATCC VR-367 / Miyayama) (Ehrlichia sennetsu), this protein is Lipoprotein-releasing system ATP-binding protein LolD.